The following is a 458-amino-acid chain: UDP-N-acetylglucosamine 1-carboxyvinyltransferase (458 aa).

Lys34–Asn35 contributes to the phosphoenolpyruvate binding site. Arg104 serves as a coordination point for UDP-N-acetyl-alpha-D-glucosamine. Cys128 acts as the Proton donor in catalysis. 2-(S-cysteinyl)pyruvic acid O-phosphothioketal is present on Cys128. Positions 319 and 341 each coordinate UDP-N-acetyl-alpha-D-glucosamine.

It belongs to the EPSP synthase family. MurA subfamily.

The protein localises to the cytoplasm. It carries out the reaction phosphoenolpyruvate + UDP-N-acetyl-alpha-D-glucosamine = UDP-N-acetyl-3-O-(1-carboxyvinyl)-alpha-D-glucosamine + phosphate. It functions in the pathway cell wall biogenesis; peptidoglycan biosynthesis. In terms of biological role, cell wall formation. Adds enolpyruvyl to UDP-N-acetylglucosamine. The protein is UDP-N-acetylglucosamine 1-carboxyvinyltransferase of Prochlorococcus marinus (strain MIT 9515).